Here is a 306-residue protein sequence, read N- to C-terminus: Pantothenate kinase (306 aa).

91 to 98 (GSVAVGKS) is a binding site for ATP.

The protein belongs to the prokaryotic pantothenate kinase family.

It localises to the cytoplasm. The catalysed reaction is (R)-pantothenate + ATP = (R)-4'-phosphopantothenate + ADP + H(+). The protein operates within cofactor biosynthesis; coenzyme A biosynthesis; CoA from (R)-pantothenate: step 1/5. This is Pantothenate kinase from Streptococcus mutans serotype c (strain ATCC 700610 / UA159).